The chain runs to 210 residues: CKLF-like MARVEL transmembrane domain-containing protein 2B (210 aa).

Helical transmembrane passes span 35 to 55, 65 to 85, 103 to 123, and 127 to 147; these read FWAQ…IAAM, PIVI…FFLY, LMND…ALEA, and LPVP…ISII. An MARVEL domain is found at 35–157; that stretch reads FWAQGHAECK…DLCLQRRQFK (123 aa).

The protein belongs to the chemokine-like factor family.

It localises to the membrane. The chain is CKLF-like MARVEL transmembrane domain-containing protein 2B (Cmtm2b) from Mus musculus (Mouse).